Consider the following 476-residue polypeptide: ENTH domain-containing protein C794.11c (476 aa).

Residues 30-154 form the ENTH domain; sequence YTSMEARVRE…VELLNDSERI (125 aa). Disordered regions lie at residues 157–198, 213–308, 410–429, and 444–472; these read ERKR…GSYR, NGYH…GFGD, QAGL…SGSN, and VHQE…LDND. Position 173 is a phosphoserine (Ser-173). Low complexity-rich tracts occupy residues 178–198 and 213–222; these read RIST…GSYR and NGYHDSSSMS. Phosphoserine is present on Ser-228. Acidic residues predominate over residues 229-240; that stretch reads DNDVEEYNEDGD. Residue Tyr-235 is modified to Phosphotyrosine. Phosphoserine occurs at positions 243 and 244. Positions 262–271 are enriched in basic and acidic residues; that stretch reads QSDKAPEQPK. Residues 444–454 are compositionally biased toward basic and acidic residues; it reads VHQENSTRERV. Ser-459 carries the phosphoserine modification.

The protein is ENTH domain-containing protein C794.11c of Schizosaccharomyces pombe (strain 972 / ATCC 24843) (Fission yeast).